The chain runs to 136 residues: MKILARFRKAEPASIYDRIGGHEALEVVVENFYVRVLADEQLSGFFTGTNMNRLKGKQVEFFAAALGGPHPYTGAPMKQVHQGRGITMHHFGLVAGHLADALTAAGVPSETVSEILGAIAPLAPEIATGEAGKVTV.

Histidine 81 serves as a coordination point for heme.

The protein belongs to the truncated hemoglobin family. Group I subfamily. As to quaternary structure, homodimer. The cofactor is heme.

Functionally, binds oxygen cooperatively with very high affinity because of a fast combination and a slow dissociation rate. This Mycolicibacterium paratuberculosis (strain ATCC BAA-968 / K-10) (Mycobacterium paratuberculosis) protein is Group 1 truncated hemoglobin GlbN (glbN).